The primary structure comprises 130 residues: ATP synthase epsilon chain (130 aa).

The protein belongs to the ATPase epsilon chain family. In terms of assembly, F-type ATPases have 2 components, CF(1) - the catalytic core - and CF(0) - the membrane proton channel. CF(1) has five subunits: alpha(3), beta(3), gamma(1), delta(1), epsilon(1). CF(0) has three main subunits: a, b and c.

The protein localises to the cell inner membrane. In terms of biological role, produces ATP from ADP in the presence of a proton gradient across the membrane. In Fuscovulum blasticum (Rhodobacter blasticus), this protein is ATP synthase epsilon chain (atpC).